A 211-amino-acid polypeptide reads, in one-letter code: Large ribosomal subunit protein uL3 (211 aa).

An N5-methylglutamine modification is found at Q150.

The protein belongs to the universal ribosomal protein uL3 family. As to quaternary structure, part of the 50S ribosomal subunit. Forms a cluster with proteins L14 and L19. Post-translationally, methylated by PrmB.

One of the primary rRNA binding proteins, it binds directly near the 3'-end of the 23S rRNA, where it nucleates assembly of the 50S subunit. The sequence is that of Large ribosomal subunit protein uL3 from Pseudomonas aeruginosa (strain LESB58).